A 362-amino-acid polypeptide reads, in one-letter code: 5-amino-6-(D-ribitylamino)uracil--L-tyrosine 4-hydroxyphenyl transferase (362 aa).

Residues 48 to 294 form the Radical SAM core domain; the sequence is ITYVVNRNIN…GDTIKNIQVS (247 aa). [4Fe-4S] cluster is bound by residues Cys-62, Cys-66, and Cys-69.

It belongs to the radical SAM superfamily. CofH family. In terms of assembly, consists of two subunits, CofG and CofH. Requires [4Fe-4S] cluster as cofactor.

The enzyme catalyses 5-amino-6-(D-ribitylamino)uracil + L-tyrosine + S-adenosyl-L-methionine = 5-amino-5-(4-hydroxybenzyl)-6-(D-ribitylimino)-5,6-dihydrouracil + 2-iminoacetate + 5'-deoxyadenosine + L-methionine + H(+). It functions in the pathway cofactor biosynthesis; coenzyme F0 biosynthesis. Catalyzes the radical-mediated synthesis of 5-amino-5-(4-hydroxybenzyl)-6-(D-ribitylimino)-5,6-dihydrouracil from 5-amino-6-(D-ribitylamino)uracil and L-tyrosine. The polypeptide is 5-amino-6-(D-ribitylamino)uracil--L-tyrosine 4-hydroxyphenyl transferase (Methanococcus aeolicus (strain ATCC BAA-1280 / DSM 17508 / OCM 812 / Nankai-3)).